Here is a 192-residue protein sequence, read N- to C-terminus: MKLVVGLGNPGEEYARTRHNVGFVVADRLAQLAGASFTAKKFAAELAEARLGPERVWILKPQTYMNHSGEAVGAALRFWKLGLDDLVVVHDDLELEPFRVQLKVGGGHGGHNGVKSVNAHVGSPEYARVRVGVGRPPPRMDPADYVLGKFAKGEDAELDLCVEQAVEATRLAVELGAAKAMNQVNRRSRAAE.

Tyr14 is a tRNA binding site. Catalysis depends on His19, which acts as the Proton acceptor. TRNA is bound by residues Tyr64, Asn66, and Asn112.

The protein belongs to the PTH family. As to quaternary structure, monomer.

It is found in the cytoplasm. It catalyses the reaction an N-acyl-L-alpha-aminoacyl-tRNA + H2O = an N-acyl-L-amino acid + a tRNA + H(+). Hydrolyzes ribosome-free peptidyl-tRNAs (with 1 or more amino acids incorporated), which drop off the ribosome during protein synthesis, or as a result of ribosome stalling. Its function is as follows. Catalyzes the release of premature peptidyl moieties from peptidyl-tRNA molecules trapped in stalled 50S ribosomal subunits, and thus maintains levels of free tRNAs and 50S ribosomes. This chain is Peptidyl-tRNA hydrolase, found in Anaeromyxobacter dehalogenans (strain 2CP-C).